Reading from the N-terminus, the 380-residue chain is Cytochrome b (380 aa).

Transmembrane regions (helical) follow at residues 33–53, 77–98, 113–133, and 178–198; these read FGSL…FLAM, WLIR…YMHI, WNIG…GYVL, and FFAF…LHLL. Positions 83 and 97 each coordinate heme b. H182 and H196 together coordinate heme b. Position 201 (H201) interacts with a ubiquinone. The next 4 helical transmembrane spans lie at 226 to 246, 288 to 308, 320 to 340, and 347 to 367; these read YKDL…ALFA, LGGV…PILH, LTQF…WIGG, and FIII…VLAP.

The protein belongs to the cytochrome b family. The cytochrome bc1 complex contains 3 respiratory subunits (MT-CYB, CYC1 and UQCRFS1), 2 core proteins (UQCRC1 and UQCRC2) and probably 6 low-molecular weight proteins. Heme b serves as cofactor.

The protein resides in the mitochondrion inner membrane. Functionally, component of the ubiquinol-cytochrome c reductase complex (complex III or cytochrome b-c1 complex) that is part of the mitochondrial respiratory chain. The b-c1 complex mediates electron transfer from ubiquinol to cytochrome c. Contributes to the generation of a proton gradient across the mitochondrial membrane that is then used for ATP synthesis. In Salmo salar (Atlantic salmon), this protein is Cytochrome b (mt-cyb).